Consider the following 113-residue polypeptide: UPF0342 protein MGAS10750_Spy0713 (113 aa).

Belongs to the UPF0342 family.

The protein is UPF0342 protein MGAS10750_Spy0713 of Streptococcus pyogenes serotype M4 (strain MGAS10750).